Here is a 221-residue protein sequence, read N- to C-terminus: NIP3 homolog (221 aa).

The tract at residues 24 to 55 (GEKTDESVQPQQQTEQSSAQQTTPSAKAVSNP) is disordered. Residue Lys-26 forms a Glycyl lysine isopeptide (Lys-Gly) (interchain with G-Cter in ubiquitin) linkage. Low complexity predominate over residues 32 to 49 (QPQQQTEQSSAQQTTPSA). A helical membrane pass occupies residues 189-209 (VVFGFLVTNIFSFVVGAAVGF). Positions 189 to 209 (VVFGFLVTNIFSFVVGAAVGF) are required for initiation of apoptosis.

It belongs to the NIP3 family. As to quaternary structure, homodimer; via transmembrane domain. Interacts with ced-3 and ced-9. In terms of processing, ubiquitinated and degraded by the proteasome. Under oxidative stress conditions, ubiquitinated at Lys-26 in a pink-1 dependent manner. Colocalizes with pdr-1 and may be ubiquitinated by it. In terms of tissue distribution, expressed in all somatic tissues including neurons, pharynx, intestine, body wall muscles and vulva muscles.

It is found in the mitochondrion outer membrane. Initiates apoptosis in a BH3-independent mechanism possibly by recruiting ced-3 to mitochondria and other cytoplasmic membranes. Has a role in lifespan and tumor growth. Required for the induction of mitophagy under stress conditions. The sequence is that of NIP3 homolog from Caenorhabditis elegans.